A 1320-amino-acid chain; its full sequence is Sal-like protein 3 (1320 aa).

Positions 1 to 11 (MSRRKQAKPQH) are enriched in basic residues. A disordered region spans residues 1–49 (MSRRKQAKPQHLKSDEELPPQDGASEHGVPGDGAEDADSGSESRSGSEE). The span at 40–49 (GSESRSGSEE) shows a compositional bias: low complexity. The segment at 51–73 (SVCEKCCAEFFKWADFLQHKKTC) adopts a C2H2-type 1; atypical zinc-finger fold. Disordered regions lie at residues 84-166 (DDEP…AFSM) and 271-367 (LSAG…NLPN). The span at 88 to 100 (APPSEDFPEPSPA) shows a compositional bias: pro residues. Phosphoserine is present on Ser-109. Basic and acidic residues predominate over residues 121–131 (SEVKAATKEAE). Residues 143–160 (PPGPSVPPPPPALPPQPE) are compositionally biased toward pro residues. Positions 271 to 289 (LSAGPATASAGSGSTLPAA) are enriched in low complexity. The segment covering 295–311 (HLSQPASGTSTPCSTSA) has biased composition (polar residues). Composition is skewed to low complexity over residues 323 to 342 (STGP…GNAV) and 355 to 367 (PGPL…NLPN). 2 C2H2-type zinc fingers span residues 427–449 (HKCR…LRSH) and 455–477 (FKCN…FQRH). A disordered region spans residues 534–623 (GLQLPPTVPG…RTGDAPVVGG (90 aa)). The span at 543–554 (GTHNYTDSPSIT) shows a compositional bias: polar residues. A compositionally biased stretch (low complexity) spans 555–568 (PVSRSPQRPSPASS). The segment covering 569 to 583 (ECTSLSPGLNNTESG) has biased composition (polar residues). 3 C2H2-type zinc fingers span residues 692-714 (NQCV…YRTH), 720-742 (FKCK…FGVH), and 752-774 (HSCP…IRMH). Disordered regions lie at residues 807 to 846 (SSFD…PPSP) and 878 to 972 (VENG…GHPG). Positions 809–823 (FDDDIDENSMEEDSE) are enriched in acidic residues. Composition is skewed to low complexity over residues 834-846 (PLLS…PPSP) and 902-923 (RSAG…PAHS). Ser-932 bears the Phosphoserine mark. C2H2-type zinc fingers lie at residues 997 to 1019 (TVCG…YRSH), 1025 to 1047 (FVCT…LLTH), 1133 to 1155 (HNCQ…ERTH), and 1161 to 1183 (FGCT…MGTH). At Ser-1197 the chain carries Phosphoserine.

It belongs to the sal C2H2-type zinc-finger protein family. In adult brain, testis and kidney. In lower levels also in adult ovaries and embryonic stem cells. In embryo in developing neuroectoderm of brain, inner ear and spinal cord. Also weakly and transiently expressed in embryonic branchial arches, notochord, limb buds and heart.

It localises to the nucleus. Functionally, probable transcription factor. The protein is Sal-like protein 3 (Sall3) of Mus musculus (Mouse).